The sequence spans 339 residues: MTVRVAINGFGRIGRNVIRALYESGRRAEITVVAINELADAVGMAHLLKYDTSHGRFAWDVRQEREQLFVGDDAIRVLHEQSIDALPWRELGVDVVLDCTGVYGNREHGEAHLAAGAKKVLFSHPGGHDLDATVVYGVNHHELQAEHRIVSNASCTTNCIIPVIKLLDDAYGIESGTVTTIHSAMHDQQVIDAYHPDLRRTRAASQSIIPVDTKLAAGITRIFPQFNDRFEAIAVRVPTINVTAIDLSVTVKKPVKASEVNLLLQKAAQGSFHGIVDYTELPLVSVDFNHDPHSAIVDGTQTRVSGAHLIKTLVWCDNEWGFANRMLDTTLAMAAQGFR.

12-13 (RI) lines the NAD(+) pocket. Substrate contacts are provided by residues 154–156 (SCT), R200, 213–214 (TK), and R236. Residue C155 is the Nucleophile of the active site. N318 lines the NAD(+) pocket.

The protein belongs to the glyceraldehyde-3-phosphate dehydrogenase family. Epd subfamily. As to quaternary structure, homotetramer.

It is found in the cytoplasm. It carries out the reaction D-erythrose 4-phosphate + NAD(+) + H2O = 4-phospho-D-erythronate + NADH + 2 H(+). Its pathway is cofactor biosynthesis; pyridoxine 5'-phosphate biosynthesis; pyridoxine 5'-phosphate from D-erythrose 4-phosphate: step 1/5. Functionally, catalyzes the NAD-dependent conversion of D-erythrose 4-phosphate to 4-phosphoerythronate. The polypeptide is D-erythrose-4-phosphate dehydrogenase (Enterobacter sp. (strain 638)).